The chain runs to 347 residues: NADH-ubiquinone oxidoreductase chain 2 (347 aa).

A run of 10 helical transmembrane segments spans residues 13–33 (IILGTSIVITSSHWLTVWIGF), 59–79 (YFLIQATASMLLMLAVTINLL), 84–104 (WAVSNMIDPLALTIMTLALAM), 111–131 (FHFWVPEVTQGVPLLSGLILL), 149–169 (IDPTLILTMSILSVLVGGWGG), 178–198 (IMAYSSISHMGWMTAILIYNP), 201–221 (TILNLLLYIMMTSTTFILLII), 240–260 (IAIIILTTMLSLGGLPPLTGF), 276–296 (IALSLFMAMAALLNLYFYTRL), and 326–346 (LSPLIIISTMILPLTPTMSAL).

The protein belongs to the complex I subunit 2 family. In terms of assembly, core subunit of respiratory chain NADH dehydrogenase (Complex I) which is composed of 45 different subunits. Interacts with TMEM242.

Its subcellular location is the mitochondrion inner membrane. The catalysed reaction is a ubiquinone + NADH + 5 H(+)(in) = a ubiquinol + NAD(+) + 4 H(+)(out). In terms of biological role, core subunit of the mitochondrial membrane respiratory chain NADH dehydrogenase (Complex I) that is believed to belong to the minimal assembly required for catalysis. Complex I functions in the transfer of electrons from NADH to the respiratory chain. The immediate electron acceptor for the enzyme is believed to be ubiquinone. This Chrotopterus auritus (Peters's woolly false vampire bat) protein is NADH-ubiquinone oxidoreductase chain 2.